Here is a 517-residue protein sequence, read N- to C-terminus: Acetylcholine receptor subunit delta (517 aa).

Residues 1 to 21 (MAGPVPTLGLLAALVVCGSWG) form the signal peptide. Residues 22-245 (LNEEQRLIQH…VTFYLIIRRK (224 aa)) lie on the Extracellular side of the membrane. N-linked (GlcNAc...) asparagine glycans are attached at residues Asn97, Asn164, and Asn190. Cys151 and Cys165 are joined by a disulfide. Helical transmembrane passes span 246–270 (PLFYIINILVPCVLISFMINLVFYL), 278–296 (TSVAISVLLAQSVFLLLIS), and 312–333 (FLLFGMVLVTMVVVICVIVLNI). Over 334-471 (HFRTPSTHVL…WNQVARTVDR (138 aa)) the chain is Cytoplasmic. The residue at position 390 (Tyr390) is a Phosphotyrosine; by Tyr-kinases. A helical membrane pass occupies residues 472-490 (LCLFVVTPVMVVGTAWIFL).

The protein belongs to the ligand-gated ion channel (TC 1.A.9) family. Acetylcholine receptor (TC 1.A.9.1) subfamily. Delta/CHRND sub-subfamily. Pentamer of two alpha chains, and one each of the beta, delta, and gamma (in immature muscle) or epsilon (in mature muscle) chains. The muscle heteropentamer composed of alpha-1, beta-1, delta, epsilon subunits interacts with the alpha-conotoxin ImII.

It localises to the postsynaptic cell membrane. The protein resides in the cell membrane. The enzyme catalyses K(+)(in) = K(+)(out). It carries out the reaction Na(+)(in) = Na(+)(out). In terms of biological role, after binding acetylcholine, the AChR responds by an extensive change in conformation that affects all subunits and leads to opening of an ion-conducting channel across the plasma membrane. In Rattus norvegicus (Rat), this protein is Acetylcholine receptor subunit delta (Chrnd).